Here is a 1750-residue protein sequence, read N- to C-terminus: Protein TIC 214 (1750 aa).

6 helical membrane-spanning segments follow: residues 12-32 (KIIN…ALSI), 69-89 (FIMG…YVAL), 97-117 (ILAL…SFFA), 129-149 (LEIY…SCIL), 177-197 (FAWF…LVWI), and 216-236 (IFVI…SIQC). Positions 260–277 (RERLQKEEERGVEKKEQS) are enriched in basic and acidic residues. Disordered regions lie at residues 260–282 (RERL…EEDP), 617–638 (ATTT…KKES), 718–738 (STDK…KQRE), 1205–1225 (RNSR…PKPV), and 1419–1512 (ETDS…NKKE). A compositionally biased stretch (low complexity) spans 617-629 (ATTTNSKTNTTKD). Residues 727–738 (KKEEKRENKQRE) show a composition bias toward basic and acidic residues. Residues 1420 to 1512 (TDSKQKSETD…TKSDKKNKKE (93 aa)) show a composition bias toward basic and acidic residues.

Belongs to the TIC214 family. In terms of assembly, part of the Tic complex.

Its subcellular location is the plastid. It is found in the chloroplast inner membrane. In terms of biological role, involved in protein precursor import into chloroplasts. May be part of an intermediate translocation complex acting as a protein-conducting channel at the inner envelope. This is Protein TIC 214 from Cuscuta reflexa (Southern Asian dodder).